A 322-amino-acid polypeptide reads, in one-letter code: 4-diphosphocytidyl-2-C-methyl-D-erythritol kinase (322 aa).

Lysine 18 is a catalytic residue. 130–140 contacts ATP; sequence PMGAGLGGGSS. Aspartate 172 is a catalytic residue.

It belongs to the GHMP kinase family. IspE subfamily.

The enzyme catalyses 4-CDP-2-C-methyl-D-erythritol + ATP = 4-CDP-2-C-methyl-D-erythritol 2-phosphate + ADP + H(+). The protein operates within isoprenoid biosynthesis; isopentenyl diphosphate biosynthesis via DXP pathway; isopentenyl diphosphate from 1-deoxy-D-xylulose 5-phosphate: step 3/6. Catalyzes the phosphorylation of the position 2 hydroxy group of 4-diphosphocytidyl-2C-methyl-D-erythritol. This Psychrobacter arcticus (strain DSM 17307 / VKM B-2377 / 273-4) protein is 4-diphosphocytidyl-2-C-methyl-D-erythritol kinase.